The following is a 472-amino-acid chain: Arabinose-proton symporter (472 aa).

Over 1–29 (MVTINTESALTPRSLRDTRRMNMFVSVAA) the chain is Cytoplasmic. A helical membrane pass occupies residues 30–50 (AVAGLLFGLDIGVIAGALPFI). The Periplasmic segment spans residues 51 to 63 (TDHFVLTSRLQEW). A helical transmembrane segment spans residues 64 to 84 (VVSSMMLGAAIGALFNGWLSF). The Cytoplasmic portion of the chain corresponds to 85 to 91 (RLGRKYS). A helical transmembrane segment spans residues 92 to 112 (LMAGAILFVLGSIGSAFATSV). Over 113–114 (EM) the chain is Periplasmic. Residues 115 to 135 (LIAARVVLGIAVGIASYTAPL) traverse the membrane as a helical segment. Residues 136–154 (YLSEMASENVRGKMISMYQ) lie on the Cytoplasmic side of the membrane. The helical transmembrane segment at 155-175 (LMVTLGIVLAFLSDTAFSYSG) threads the bilayer. At 176–178 (NWR) the chain is on the periplasmic side. Residues 179-199 (AMLGVLALPAVLLIILVVFLP) traverse the membrane as a helical segment. Topologically, residues 200-257 (NSPRWLAEKGRHIEAEEVLRMLRDTSEKAREELNEIRESLKLKQGGWALFKINRNVRR) are cytoplasmic. Residues 258-278 (AVFLGMLLQAMQQFTGMNIIM) form a helical membrane-spanning segment. Topologically, residues 279-297 (YYAPRIFKMAGFTTTEQQM) are periplasmic. A helical membrane pass occupies residues 298–318 (IATLVVGLTFMFATFIAVFTV). At 319–325 (DKAGRKP) the chain is on the cytoplasmic side. Residues 326–346 (ALKIGFSVMALGTLVLGYCLM) form a helical membrane-spanning segment. The Periplasmic portion of the chain corresponds to 347 to 361 (QFDNGTASSGLSWLS). A helical membrane pass occupies residues 362–382 (VGMTMMCIAGYAMSAAPVVWI). Residues 383–404 (LCSEIQPLKCRDFGITCSTTTN) are Cytoplasmic-facing. The next 2 helical transmembrane spans lie at 405–425 (WVSN…IGAA) and 426–446 (GTFW…FWLI). Over 447–472 (PETKNVTLEHIERKLMAGEKLRNIGV) the chain is Cytoplasmic.

The protein belongs to the major facilitator superfamily. Sugar transporter (TC 2.A.1.1) family.

It is found in the cell inner membrane. It catalyses the reaction L-arabinose(in) + H(+)(in) = L-arabinose(out) + H(+)(out). In terms of biological role, uptake of L-arabinose across the cytoplasmic membrane with the concomitant transport of protons into the cell (symport system). The protein is Arabinose-proton symporter (araE) of Escherichia coli O157:H7.